The chain runs to 157 residues: Protein Smg homolog (157 aa).

The protein belongs to the Smg family.

This chain is Protein Smg homolog, found in Stenotrophomonas maltophilia (strain R551-3).